The primary structure comprises 278 residues: Potassium/proton antiporter CemA (278 aa).

A run of 4 helical transmembrane segments spans residues 61–81 (IFLL…FDFG), 155–175 (AVKN…LMIT), 203–223 (IILF…EVII), and 238–258 (FIFL…KYWI).

Belongs to the CemA family.

It is found in the plastid. Its subcellular location is the chloroplast inner membrane. The catalysed reaction is K(+)(in) + H(+)(out) = K(+)(out) + H(+)(in). In terms of biological role, contributes to K(+)/H(+) antiport activity by supporting proton efflux to control proton extrusion and homeostasis in chloroplasts in a light-dependent manner to modulate photosynthesis. Prevents excessive induction of non-photochemical quenching (NPQ) under continuous-light conditions. Indirectly promotes efficient inorganic carbon uptake into chloroplasts. The protein is Potassium/proton antiporter CemA of Porphyra purpurea (Red seaweed).